Consider the following 122-residue polypeptide: Prefoldin subunit 1 (122 aa).

This sequence belongs to the prefoldin subunit beta family. In terms of assembly, heterohexamer of two PFD-alpha type and four PFD-beta type subunits.

Binds specifically to cytosolic chaperonin (c-CPN) and transfers target proteins to it. Binds to nascent polypeptide chain and promotes folding in an environment in which there are many competing pathways for nonnative proteins. This Tetraodon nigroviridis (Spotted green pufferfish) protein is Prefoldin subunit 1 (pfdn1).